Reading from the N-terminus, the 560-residue chain is Exonuclease subunit 2 (560 aa).

36 to 43 is a binding site for ATP; sequence GRNGGGKS.

The protein to phage T5 protein D13 and to yeast RAD52. In terms of assembly, consists of two subunits: gp46 and gp47.

In terms of biological role, exonuclease that plays a role in viral genome replication, DNA recombination, and host DNA degradation. This Enterobacteria phage T4 (Bacteriophage T4) protein is Exonuclease subunit 2 (46).